A 411-amino-acid polypeptide reads, in one-letter code: MFHPRARTMLLLSLPALIIGVASSLVLIASMKVASVFQQFLWQRLPASIGIAYDSPFWIVGMLTLTGIVVGLIIRYSPGHAGPDPAIEPLISMPVSPSALPGLLLALIIGLAGGVSLGPEHPIMTINIALAAAFGSRLFPRITALDWTILASAGTIGALFGTPVAAALIFSQTLSGSNDIPMWDRLFAPLMAAAAGSLTTSLFFHPHFSLPIAHYTQMRLVDIASGAIVAAIAIAAGMVAVWCLPRLHELLHRLKNPVLILGIGGFILGILGVIGGPLTLFKGLDEMQQMAFSQTLGAGDYFTLAAVKLAALVIAAASGFRGGRIFPAVFIGAALGLMLHAHVEAVPAAITVSCAILGLVLVVTRDGWLSLFMAAVVVPDTNLLPLLCIVMLPAWLLLAGKPLLAANRHEP.

11 consecutive transmembrane segments (helical) span residues 9–29, 54–74, 99–119, 149–169, 186–206, 223–243, 258–278, 296–316, 322–342, 343–363, and 386–406; these read MLLLSLPALIIGVASSLVLIA, DSPFWIVGMLTLTGIVVGLII, ALPGLLLALIIGLAGGVSLGP, ILASAGTIGALFGTPVAAALI, LFAPLMAAAAGSLTTSLFFHP, IASGAIVAAIAIAAGMVAVWC, VLILGIGGFILGILGVIGGPL, LGAGDYFTLAAVKLAALVIAA, GGRIFPAVFIGAALGLMLHAH, VEAVPAAITVSCAILGLVLVV, and LLCIVMLPAWLLLAGKPLLAA.

This sequence belongs to the chloride channel (TC 2.A.49) family.

The protein localises to the cell membrane. This is Putative ion-transport protein YfeO from Salmonella schwarzengrund (strain CVM19633).